We begin with the raw amino-acid sequence, 136 residues long: Ribonuclease P protein component (136 aa).

Positions 116–136 (RPQRAAAKGSAGTTQKGTPRA) are disordered. Polar residues predominate over residues 126–136 (AGTTQKGTPRA).

Belongs to the RnpA family. In terms of assembly, consists of a catalytic RNA component (M1 or rnpB) and a protein subunit.

The enzyme catalyses Endonucleolytic cleavage of RNA, removing 5'-extranucleotides from tRNA precursor.. In terms of biological role, RNaseP catalyzes the removal of the 5'-leader sequence from pre-tRNA to produce the mature 5'-terminus. It can also cleave other RNA substrates such as 4.5S RNA. The protein component plays an auxiliary but essential role in vivo by binding to the 5'-leader sequence and broadening the substrate specificity of the ribozyme. This Pseudarthrobacter chlorophenolicus (strain ATCC 700700 / DSM 12829 / CIP 107037 / JCM 12360 / KCTC 9906 / NCIMB 13794 / A6) (Arthrobacter chlorophenolicus) protein is Ribonuclease P protein component.